A 503-amino-acid chain; its full sequence is Activin receptor type-1-like (503 aa).

The first 21 residues, 1-21, serve as a signal peptide directing secretion; that stretch reads MTLGSPRRGLLMLLMALVTQG. At 22 to 118 the chain is on the extracellular side; it reads DPVKPSRGPL…PSEQPGTDGQ (97 aa). Disulfide bonds link Cys34-Cys51, Cys36-Cys41, and Cys46-Cys69. The mediates specificity for BMP ligand stretch occupies residues 73–76; it reads HREL. 2 disulfides stabilise this stretch: Cys77-Cys89 and Cys90-Cys95. An N-linked (GlcNAc...) asparagine glycan is attached at Asn98. The helical transmembrane segment at 119 to 141 threads the bilayer; it reads LALILGPVLALLALVALGVLGLW. The Cytoplasmic segment spans residues 142-503; sequence HVRRRQEKQR…NSPEKPKVIQ (362 aa). 3 positions are modified to phosphoserine: Ser155, Ser160, and Ser161. The 30-residue stretch at 172-201 folds into the GS domain; sequence SMLGDLLDSDCTTGSGSGLPFLVQRTVARQ. The Protein kinase domain maps to 202 to 492; the sequence is VALVECVGKG…LRIKKTLQKI (291 aa). ATP-binding positions include 208–216 and Lys229; that span reads VGKGRYGEV. Asp330 (proton acceptor) is an active-site residue.

Belongs to the protein kinase superfamily. TKL Ser/Thr protein kinase family. TGFB receptor subfamily. In terms of assembly, interacts with TSC22D1/TSC-22. Mg(2+) serves as cofactor. Requires Mn(2+) as cofactor.

It is found in the cell membrane. It carries out the reaction L-threonyl-[receptor-protein] + ATP = O-phospho-L-threonyl-[receptor-protein] + ADP + H(+). It catalyses the reaction L-seryl-[receptor-protein] + ATP = O-phospho-L-seryl-[receptor-protein] + ADP + H(+). Its function is as follows. Type I receptor for TGF-beta family ligands BMP9/GDF2 and BMP10 and important regulator of normal blood vessel development. On ligand binding, forms a receptor complex consisting of two type II and two type I transmembrane serine/threonine kinases. Type II receptors phosphorylate and activate type I receptors which autophosphorylate, then bind and activate SMAD transcriptional regulators. May bind activin as well. The sequence is that of Activin receptor type-1-like (ACVRL1) from Pongo abelii (Sumatran orangutan).